Here is a 369-residue protein sequence, read N- to C-terminus: Anhydro-N-acetylmuramic acid kinase (369 aa).

Residue 12 to 19 participates in ATP binding; it reads GTSLDGVD.

It belongs to the anhydro-N-acetylmuramic acid kinase family.

It catalyses the reaction 1,6-anhydro-N-acetyl-beta-muramate + ATP + H2O = N-acetyl-D-muramate 6-phosphate + ADP + H(+). The protein operates within amino-sugar metabolism; 1,6-anhydro-N-acetylmuramate degradation. Its pathway is cell wall biogenesis; peptidoglycan recycling. Functionally, catalyzes the specific phosphorylation of 1,6-anhydro-N-acetylmuramic acid (anhMurNAc) with the simultaneous cleavage of the 1,6-anhydro ring, generating MurNAc-6-P. Is required for the utilization of anhMurNAc either imported from the medium or derived from its own cell wall murein, and thus plays a role in cell wall recycling. The chain is Anhydro-N-acetylmuramic acid kinase from Actinobacillus pleuropneumoniae serotype 5b (strain L20).